Consider the following 315-residue polypeptide: Ribose-phosphate pyrophosphokinase (315 aa).

Residues 37–39 and 96–97 each bind ATP; these read DGE and RQ. The Mg(2+) site is built by His-131 and Asp-170. Lys-194 is a catalytic residue. D-ribose 5-phosphate contacts are provided by residues Arg-196, Asp-220, and 224–228; that span reads DTGGT.

It belongs to the ribose-phosphate pyrophosphokinase family. Class I subfamily. In terms of assembly, homohexamer. Mg(2+) is required as a cofactor.

It localises to the cytoplasm. It carries out the reaction D-ribose 5-phosphate + ATP = 5-phospho-alpha-D-ribose 1-diphosphate + AMP + H(+). The protein operates within metabolic intermediate biosynthesis; 5-phospho-alpha-D-ribose 1-diphosphate biosynthesis; 5-phospho-alpha-D-ribose 1-diphosphate from D-ribose 5-phosphate (route I): step 1/1. In terms of biological role, involved in the biosynthesis of the central metabolite phospho-alpha-D-ribosyl-1-pyrophosphate (PRPP) via the transfer of pyrophosphoryl group from ATP to 1-hydroxyl of ribose-5-phosphate (Rib-5-P). This chain is Ribose-phosphate pyrophosphokinase, found in Escherichia coli O6:H1 (strain CFT073 / ATCC 700928 / UPEC).